The primary structure comprises 54 residues: Protein PIGBOS1 (54 aa).

The Mitochondrial intermembrane portion of the chain corresponds to 1–4 (MFRR). A helical membrane pass occupies residues 5-25 (LTFAQLLFATVLGIAGGVYIF). Residues 26-54 (QPVFEQYAKDQKELKEKMQLVQESEEKKS) lie on the Cytoplasmic side of the membrane. The required for interaction with CLCC1 stretch occupies residues 30–36 (EQYAKDQ).

In terms of assembly, homooligomer. Interacts (via C-terminus) with endoplasmic reticulum (ER) protein CLCC1; the interaction occurs at the mitochondria-associated ER membrane, a zone of contact between the ER and mitochondrial membranes, but does not appear to play a role in ER-mitochondria tethering and is not affected by ER stress.

The protein resides in the mitochondrion outer membrane. Its function is as follows. Plays a role in regulation of the unfolded protein response triggered by endoplasmic reticulum (ER) stress resulting from the presence of unfolded proteins in the ER lumen. The chain is Protein PIGBOS1 from Homo sapiens (Human).